Reading from the N-terminus, the 615-residue chain is Medium-chain acyl-CoA ligase ACSF2, mitochondrial (615 aa).

The transit peptide at 1–49 (MAVYLGMLRLGRLCVASLGARGPRTPLSRPWPNSKLQGVRAFSSGMVDC) directs the protein to the mitochondrion. Lys179 is subject to N6-acetyllysine. Lys182 carries the N6-acetyllysine; alternate modification. The residue at position 182 (Lys182) is an N6-succinyllysine; alternate. Lys199 bears the N6-acetyllysine mark. 263 to 271 (TSGTTGNPK) provides a ligand contact to ATP. An N6-acetyllysine mark is found at Lys340 and Lys398. Lys478 carries the post-translational modification N6-succinyllysine. Positions 493 and 508 each coordinate ATP. Lys510 bears the N6-acetyllysine mark. An N6-acetyllysine; alternate mark is found at Lys544 and Lys570. N6-succinyllysine; alternate occurs at positions 544 and 570. Position 599 (Lys599) interacts with ATP. Residue Lys599 is modified to N6-succinyllysine.

Belongs to the ATP-dependent AMP-binding enzyme family.

It localises to the mitochondrion. It catalyses the reaction a medium-chain fatty acid + ATP + CoA = a medium-chain fatty acyl-CoA + AMP + diphosphate. The catalysed reaction is octanoate + ATP + CoA = octanoyl-CoA + AMP + diphosphate. In terms of biological role, acyl-CoA synthases catalyze the initial reaction in fatty acid metabolism, by forming a thioester with CoA. Has some preference toward medium-chain substrates. Plays a role in adipocyte differentiation. This Rattus norvegicus (Rat) protein is Medium-chain acyl-CoA ligase ACSF2, mitochondrial.